Here is a 550-residue protein sequence, read N- to C-terminus: Aldehyde dehydrogenase family 3 member I1, chloroplastic (550 aa).

A chloroplast-targeting transit peptide spans 1 to 59; it reads MTKLLEINHIQTLCFAKGFSPARLNVATSPFRISRRGGGGYCSNACIPYRLKFTCYATL. Residue 259-264 coordinates NAD(+); that stretch reads GGARVA. Glu-281 acts as the Proton acceptor in catalysis. Cys-316 (nucleophile) is an active-site residue.

Belongs to the aldehyde dehydrogenase family. In terms of assembly, homodimer and homomultimer.

The protein resides in the plastid. It is found in the chloroplast. It carries out the reaction an aldehyde + NAD(+) + H2O = a carboxylate + NADH + 2 H(+). Its activity is regulated as follows. Thiol-based regulation. Inactivation after dimerization under oxidizing conditions. Involved in oxidative stress tolerance by detoxifying reactive aldehydes derived from lipid peroxidation. Medium- to long-chain saturated aldehydes are preferred substrates, while the short-chain aldehyde propanal is a weak substrate. Can use both NAD(+) and NADP(+), but the coenzyme preference is substrate dependent. The polypeptide is Aldehyde dehydrogenase family 3 member I1, chloroplastic (ALDH3I1) (Arabidopsis thaliana (Mouse-ear cress)).